A 333-amino-acid polypeptide reads, in one-letter code: tRNA pseudouridine synthase B (333 aa).

Asp46 functions as the Nucleophile in the catalytic mechanism.

It belongs to the pseudouridine synthase TruB family. Type 1 subfamily.

The enzyme catalyses uridine(55) in tRNA = pseudouridine(55) in tRNA. Responsible for synthesis of pseudouridine from uracil-55 in the psi GC loop of transfer RNAs. The sequence is that of tRNA pseudouridine synthase B from Gluconobacter oxydans (strain 621H) (Gluconobacter suboxydans).